The chain runs to 206 residues: Bacteriochlorophyll synthase 23 kDa chain (206 aa).

Its pathway is porphyrin-containing compound metabolism; bacteriochlorophyll biosynthesis (light-independent). The protein is Bacteriochlorophyll synthase 23 kDa chain (bchJ) of Cereibacter sphaeroides (strain ATCC 17023 / DSM 158 / JCM 6121 / CCUG 31486 / LMG 2827 / NBRC 12203 / NCIMB 8253 / ATH 2.4.1.) (Rhodobacter sphaeroides).